A 285-amino-acid chain; its full sequence is V-set and transmembrane domain-containing protein 2B (285 aa).

The N-terminal stretch at 1–28 is a signal peptide; sequence MEQRNRLGALGYLPPLLLHALLLFVADA. The Ig-like V-type domain occupies 29-143; sequence AFTEVPKDVT…DDDTQEHKAQ (115 aa). Topologically, residues 29–263 are extracellular; the sequence is AFTEVPKDVT…HGSGTGRSYT (235 aa). Cysteine 49 and cysteine 127 form a disulfide bridge. The disordered stretch occupies residues 161–226; that stretch reads EAVSHIQSSG…EAAAASAAHT (66 aa). 2 stretches are compositionally biased toward low complexity: residues 177–189 and 208–226; these read ASAANANNAGAAS and PAAIDPAVPEAAAASAAHT. The helical transmembrane segment at 264–284 threads the bilayer; the sequence is TDPLLSLLLLALHKFLRLLLG. Position 285 (histidine 285) is a topological domain, cytoplasmic.

The protein resides in the membrane. The sequence is that of V-set and transmembrane domain-containing protein 2B (VSTM2B) from Homo sapiens (Human).